The chain runs to 448 residues: Phosphoglucosamine mutase (448 aa).

Catalysis depends on serine 99, which acts as the Phosphoserine intermediate. Residues serine 99, aspartate 239, aspartate 241, and aspartate 243 each coordinate Mg(2+). Serine 99 is modified (phosphoserine).

It belongs to the phosphohexose mutase family. Requires Mg(2+) as cofactor. Post-translationally, activated by phosphorylation.

The enzyme catalyses alpha-D-glucosamine 1-phosphate = D-glucosamine 6-phosphate. Its function is as follows. Catalyzes the conversion of glucosamine-6-phosphate to glucosamine-1-phosphate. The chain is Phosphoglucosamine mutase from Lachnoclostridium phytofermentans (strain ATCC 700394 / DSM 18823 / ISDg) (Clostridium phytofermentans).